A 170-amino-acid chain; its full sequence is Type II secretion system protein H (170 aa).

Positions M1–G5 are cleaved as a propeptide — leader sequence. At F6 the chain carries N-methylphenylalanine. A helical membrane pass occupies residues F6–F29.

The protein belongs to the GSP H family. In terms of assembly, type II secretion is composed of four main components: the outer membrane complex, the inner membrane complex, the cytoplasmic secretion ATPase and the periplasm-spanning pseudopilus. Interacts with core component PulG. Cleaved by prepilin peptidase. Post-translationally, methylated by prepilin peptidase at the amino group of the N-terminal phenylalanine once the leader sequence is cleaved by prepilin peptidase.

It is found in the cell inner membrane. Component of the type II secretion system required for the energy-dependent secretion of extracellular factors such as proteases and toxins from the periplasm. Part of the pseudopilus tip complex that is critical for the recognition and binding of secretion substrates. This is Type II secretion system protein H (pulH) from Klebsiella pneumoniae.